A 335-amino-acid chain; its full sequence is MQKAIIIGASGYTGAELARLLIKHPEFELTGLYVSRQSQDANKCISDIYPQLKHLVDLPLQPLPEQLTQLAQQADLVFLATAHEVSHDLAPIFLQNQCKVFDLSGAFRVNNAAFYRTFYGFEHQHPELLTQAVYGLAEWNAHQIKQTDLVAVAGCYPTVSQLSLKPLIAHNLLDLTQLPVINAVSGVSGAGRKATLTSSFCEVSLNAYGVFNHRHQPEIATHLGTEVIFTPHLGNFKRGILATITAKLKTGVSDEQIRVAYQHAYADKPLVRVYEQGLPSIKAVEFTPYCDIGFVTKNGHIIIIGAEDNLLKGAAAQAVQCANIRYGLTETLGLL.

Residue Cys-155 is part of the active site.

The protein belongs to the NAGSA dehydrogenase family. Type 1 subfamily.

It localises to the cytoplasm. The enzyme catalyses N-acetyl-L-glutamate 5-semialdehyde + phosphate + NADP(+) = N-acetyl-L-glutamyl 5-phosphate + NADPH + H(+). The protein operates within amino-acid biosynthesis; L-arginine biosynthesis; N(2)-acetyl-L-ornithine from L-glutamate: step 3/4. Functionally, catalyzes the NADPH-dependent reduction of N-acetyl-5-glutamyl phosphate to yield N-acetyl-L-glutamate 5-semialdehyde. In Pasteurella multocida (strain Pm70), this protein is N-acetyl-gamma-glutamyl-phosphate reductase.